A 563-amino-acid chain; its full sequence is Putative ABC transporter ATP-binding protein SCO2324 (563 aa).

Positions Ile2–Leu243 constitute an ABC transporter 1 domain. Gly36–Ser43 is a binding site for ATP. The tract at residues Ala271–Ala317 is disordered. Positions His278–Arg293 are enriched in pro residues. An ABC transporter 2 domain is found at Ala317–Lys545. Gly349–Ser356 lines the ATP pocket.

This sequence belongs to the ABC transporter superfamily.

It is found in the cell membrane. Probably part of an ABC transporter complex. Responsible for energy coupling to the transport system. This chain is Putative ABC transporter ATP-binding protein SCO2324, found in Streptomyces coelicolor (strain ATCC BAA-471 / A3(2) / M145).